The primary structure comprises 158 residues: Large ribosomal subunit protein uL15 (158 aa).

Residues 1 to 13 are compositionally biased toward basic and acidic residues; the sequence is MKLNEIKDNEGST. Residues 1 to 44 form a disordered region; the sequence is MKLNEIKDNEGSTHSRKRLGRGIGSGSGKTAGRGVKGQKSRSGV. The segment covering 21-35 has biased composition (gly residues); that stretch reads RGIGSGSGKTAGRGV.

Belongs to the universal ribosomal protein uL15 family. As to quaternary structure, part of the 50S ribosomal subunit.

Its function is as follows. Binds to the 23S rRNA. The chain is Large ribosomal subunit protein uL15 from Rhizobium etli (strain ATCC 51251 / DSM 11541 / JCM 21823 / NBRC 15573 / CFN 42).